The primary structure comprises 271 residues: Bifunctional protein FolD (271 aa).

Residues 154–156 (GRS), serine 181, and isoleucine 222 each bind NADP(+).

This sequence belongs to the tetrahydrofolate dehydrogenase/cyclohydrolase family. As to quaternary structure, homodimer.

The enzyme catalyses (6R)-5,10-methylene-5,6,7,8-tetrahydrofolate + NADP(+) = (6R)-5,10-methenyltetrahydrofolate + NADPH. It carries out the reaction (6R)-5,10-methenyltetrahydrofolate + H2O = (6R)-10-formyltetrahydrofolate + H(+). It functions in the pathway one-carbon metabolism; tetrahydrofolate interconversion. Functionally, catalyzes the oxidation of 5,10-methylenetetrahydrofolate to 5,10-methenyltetrahydrofolate and then the hydrolysis of 5,10-methenyltetrahydrofolate to 10-formyltetrahydrofolate. The protein is Bifunctional protein FolD of Thermotoga maritima (strain ATCC 43589 / DSM 3109 / JCM 10099 / NBRC 100826 / MSB8).